Here is a 490-residue protein sequence, read N- to C-terminus: Serine/threonine-protein kinase BSK6 (490 aa).

The N-myristoyl glycine moiety is linked to residue Gly2. Phosphoserine is present on Ser25. The Protein kinase domain maps to 56–310; the sequence is DNIVSEHGEK…KSLVTSLVTL (255 aa). ATP-binding positions include 62-70 and Lys84; that span reads HGEKAPNVV. Asp178 acts as the Proton acceptor in catalysis. Ser373 carries the post-translational modification Phosphoserine.

This sequence belongs to the protein kinase superfamily. Ser/Thr protein kinase family. Interacts with BRI1, ASK7/BIN2, ASK9/BIL2, BSK1, BSK5, BSK8 and BSK11. In terms of processing, phosphorylated by BRI1, ASK7/BIN2 and ASK9/BIL2.

The protein localises to the cell membrane. It catalyses the reaction L-seryl-[protein] + ATP = O-phospho-L-seryl-[protein] + ADP + H(+). The catalysed reaction is L-threonyl-[protein] + ATP = O-phospho-L-threonyl-[protein] + ADP + H(+). Functionally, probable serine/threonine kinase that acts as a positive regulator of brassinosteroid (BR) signaling downstream of the receptor kinase BRI1. Functions redundantly with BSK3, BSK4, BSK7 and BSK8. The sequence is that of Serine/threonine-protein kinase BSK6 from Arabidopsis thaliana (Mouse-ear cress).